A 413-amino-acid polypeptide reads, in one-letter code: Serine hydroxymethyltransferase (413 aa).

(6S)-5,6,7,8-tetrahydrofolate contacts are provided by residues Leu-119 and 123–125; that span reads GHL. N6-(pyridoxal phosphate)lysine is present on Lys-228. 351–353 serves as a coordination point for (6S)-5,6,7,8-tetrahydrofolate; it reads SPF.

Belongs to the SHMT family. In terms of assembly, homodimer. It depends on pyridoxal 5'-phosphate as a cofactor.

It localises to the cytoplasm. It carries out the reaction (6R)-5,10-methylene-5,6,7,8-tetrahydrofolate + glycine + H2O = (6S)-5,6,7,8-tetrahydrofolate + L-serine. It functions in the pathway one-carbon metabolism; tetrahydrofolate interconversion. The protein operates within amino-acid biosynthesis; glycine biosynthesis; glycine from L-serine: step 1/1. In terms of biological role, catalyzes the reversible interconversion of serine and glycine with tetrahydrofolate (THF) serving as the one-carbon carrier. This reaction serves as the major source of one-carbon groups required for the biosynthesis of purines, thymidylate, methionine, and other important biomolecules. Also exhibits THF-independent aldolase activity toward beta-hydroxyamino acids, producing glycine and aldehydes, via a retro-aldol mechanism. The polypeptide is Serine hydroxymethyltransferase (Anoxybacillus flavithermus (strain DSM 21510 / WK1)).